A 232-amino-acid chain; its full sequence is MAKLSKRLQAFAAKVDRQKLYAIDEALSLVKECASAKFDESIDVAVQLGIDAKKSDQVVRGSVVLPAGTGKSVRVAVFAQGEKAEQARAAGAEVVGMEDLAEQVKAGKLDFDIVIASPDTMRVVGTLGQILGPRGLMPNPKVGTVTPDVATAVKNAKAGQVQFRVDKAGIIHATIGRASFEPTALRSNLNALVDALQKAKPATSKGVYLRKVALSSTMGVGVRVDQASLAAQ.

Belongs to the universal ribosomal protein uL1 family. As to quaternary structure, part of the 50S ribosomal subunit.

Functionally, binds directly to 23S rRNA. The L1 stalk is quite mobile in the ribosome, and is involved in E site tRNA release. Protein L1 is also a translational repressor protein, it controls the translation of the L11 operon by binding to its mRNA. The sequence is that of Large ribosomal subunit protein uL1 from Paraburkholderia xenovorans (strain LB400).